Reading from the N-terminus, the 195-residue chain is Small ribosomal subunit protein uS4B (195 aa).

Positions 107-181 (RRLQTQVYKL…VARRNAARKA (75 aa)) constitute an S4 RNA-binding domain. Residues 161 to 195 (TSPFGGARPGRVARRNAARKAEASGEAAEEAEDEE) are disordered. A Glycyl lysine isopeptide (Lys-Gly) (interchain with G-Cter in ubiquitin) cross-link involves residue Lys180. Residue Ser184 is modified to Phosphoserine.

It belongs to the universal ribosomal protein uS4 family. In terms of assembly, component of the small ribosomal subunit (SSU). Mature yeast ribosomes consist of a small (40S) and a large (60S) subunit. The 40S small subunit contains 1 molecule of ribosomal RNA (18S rRNA) and 33 different proteins (encoded by 57 genes). The large 60S subunit contains 3 rRNA molecules (25S, 5.8S and 5S rRNA) and 46 different proteins (encoded by 81 genes). Interacts with snoRNA U3. uS11 interacts with MPP10. Component of the ribosomal small subunit (SSU) processome composed of at least 40 protein subunits and snoRNA U3.

The protein resides in the cytoplasm. It localises to the nucleus. It is found in the nucleolus. Its function is as follows. Component of the ribosome, a large ribonucleoprotein complex responsible for the synthesis of proteins in the cell. The small ribosomal subunit (SSU) binds messenger RNAs (mRNAs) and translates the encoded message by selecting cognate aminoacyl-transfer RNA (tRNA) molecules. The large subunit (LSU) contains the ribosomal catalytic site termed the peptidyl transferase center (PTC), which catalyzes the formation of peptide bonds, thereby polymerizing the amino acids delivered by tRNAs into a polypeptide chain. The nascent polypeptides leave the ribosome through a tunnel in the LSU and interact with protein factors that function in enzymatic processing, targeting, and the membrane insertion of nascent chains at the exit of the ribosomal tunnel. uS4 is involved in nucleolar processing of pre-18S ribosomal RNA and ribosome assembly. The polypeptide is Small ribosomal subunit protein uS4B (Saccharomyces cerevisiae (strain ATCC 204508 / S288c) (Baker's yeast)).